We begin with the raw amino-acid sequence, 691 residues long: Calcium-binding and coiled-coil domain-containing protein 1 (691 aa).

Residues 1–30 (MEESSLSRAPSRGGVNFLNVARTYIPNTKV) form a p300 KIX-binding region. Residues 1–190 (MEESSLSRAP…VQELEAALAT (190 aa)) form an N-terminal AD (CTNNB1 binding site) region. Ser-4 carries the phosphoserine modification. Residues 45–125 (SDWIGIFKVE…FQFREPRPMD (81 aa)) are interaction with GATA1. Coiled coils occupy residues 145 to 205 (KATV…YKGL), 232 to 339 (ELED…AELE), and 417 to 514 (QSME…ADEK). Residues 501–691 (RKLEARLEKV…FSTQDPFTFE (191 aa)) form a C-terminal AD (CTNNB1 binding site); interaction with CCAR1 region. A disordered region spans residues 512 to 605 (DEKWTEDAAT…DSEAEDEKSV (94 aa)). A UBZ1-type zinc finger spans residues 653–679 (WKECPICKERFPAESDKDALEGHMDGH). Residues Cys-656, Cys-659, His-675, and His-679 each coordinate Zn(2+).

Belongs to the CALCOCO family. Part of a calphoglin complex consisting of CALCOCO1, PPA1 and PGM. Interacts with the bHLH-PAS domains of GRIP1, AHR and ARNT. Interacts with CTNNB1 via both its N- and C-terminal regions. Interacts with EP300. Interacts with CCAR1 (via N-terminus) and GATA1. In terms of tissue distribution, expressed in all tissues examined except spleen, with high levels of expression in the heart and kidney.

It is found in the cytoplasm. Its subcellular location is the nucleus. Functionally, functions as a coactivator for aryl hydrocarbon and nuclear receptors (NR). Recruited to promoters through its contact with the N-terminal basic helix-loop-helix-Per-Arnt-Sim (PAS) domain of transcription factors or coactivators, such as NCOA2. During ER-activation acts synergistically in combination with other NCOA2-binding proteins, such as EP300, CREBBP and CARM1. Involved in the transcriptional activation of target genes in the Wnt/CTNNB1 pathway. Functions as a secondary coactivator in LEF1-mediated transcriptional activation via its interaction with CTNNB1. Coactivator function for nuclear receptors and LEF1/CTNNB1 involves differential utilization of two different activation regions. In association with CCAR1 enhances GATA1- and MED1-mediated transcriptional activation from the gamma-globin promoter during erythroid differentiation of K562 erythroleukemia cells. The sequence is that of Calcium-binding and coiled-coil domain-containing protein 1 (Calcoco1) from Mus musculus (Mouse).